Here is a 149-residue protein sequence, read N- to C-terminus: Cyanate hydratase (149 aa).

Residues Arg-90, Glu-93, and Ser-116 contribute to the active site.

This sequence belongs to the cyanase family.

It catalyses the reaction cyanate + hydrogencarbonate + 3 H(+) = NH4(+) + 2 CO2. In terms of biological role, catalyzes the reaction of cyanate with bicarbonate to produce ammonia and carbon dioxide. This Aquifex aeolicus (strain VF5) protein is Cyanate hydratase.